A 492-amino-acid chain; its full sequence is Trigger factor (492 aa).

The PPIase FKBP-type domain maps to 164-249 (GDLVVVDFVG…VSDVRVPRKA (86 aa)). The interval 440–492 (EAEEDSIGKHDHDHDHKEKASDKPKAKKAAAPKKKAAPKKKAAPKAEKKSSDE) is disordered. A compositionally biased stretch (basic and acidic residues) spans 445-463 (SIGKHDHDHDHKEKASDKP). A compositionally biased stretch (basic residues) spans 464–482 (KAKKAAAPKKKAAPKKKAA). The segment covering 483 to 492 (PKAEKKSSDE) has biased composition (basic and acidic residues).

This sequence belongs to the FKBP-type PPIase family. Tig subfamily.

It is found in the cytoplasm. It carries out the reaction [protein]-peptidylproline (omega=180) = [protein]-peptidylproline (omega=0). Functionally, involved in protein export. Acts as a chaperone by maintaining the newly synthesized protein in an open conformation. Functions as a peptidyl-prolyl cis-trans isomerase. This chain is Trigger factor, found in Zymomonas mobilis subsp. mobilis (strain ATCC 31821 / ZM4 / CP4).